Consider the following 128-residue polypeptide: UPF0102 protein RPB_0420 (128 aa).

It belongs to the UPF0102 family.

The sequence is that of UPF0102 protein RPB_0420 from Rhodopseudomonas palustris (strain HaA2).